The following is a 233-amino-acid chain: Large ribosomal subunit protein uL1 (233 aa).

Belongs to the universal ribosomal protein uL1 family. Part of the 50S ribosomal subunit.

In terms of biological role, binds directly to 23S rRNA. The L1 stalk is quite mobile in the ribosome, and is involved in E site tRNA release. Functionally, protein L1 is also a translational repressor protein, it controls the translation of the L11 operon by binding to its mRNA. The chain is Large ribosomal subunit protein uL1 from Rhizobium etli (strain ATCC 51251 / DSM 11541 / JCM 21823 / NBRC 15573 / CFN 42).